The following is a 310-amino-acid chain: MARRGKGRSINGIILLDKPTDISSNHALQRVKRIFFANKAGHTGALDPLATGMLPVCLGEATKFSQFLLDSDKRYIVTATLGVRTTTSDSQGDVVSERPVEVTQTQLDQALDTFRGDIMQVPSMFSALKHKGQPLYKYAREGITIEREARPITVYEINQLRFEGNEVELDIHVSKGTYIRTIVDDLGELLGCGAHVSVLRRTQVADYPYDKMVTIEQLEALIEQAKESDVSPYDLLDPLLLDMDTAVKKYPEVNISDEMGEYVLHGQPVQVFGAPDNTVLRITVGEAHTFIGVGKMNEAGLIAPTRLANL.

The active-site Nucleophile is D47.

Belongs to the pseudouridine synthase TruB family. Type 1 subfamily.

It carries out the reaction uridine(55) in tRNA = pseudouridine(55) in tRNA. In terms of biological role, responsible for synthesis of pseudouridine from uracil-55 in the psi GC loop of transfer RNAs. The polypeptide is tRNA pseudouridine synthase B (Psychromonas ingrahamii (strain DSM 17664 / CCUG 51855 / 37)).